The chain runs to 318 residues: GTP cyclohydrolase MptA (318 aa).

The protein belongs to the GTP cyclohydrolase IV family. In terms of assembly, homodimer. Requires Fe(2+) as cofactor.

It carries out the reaction GTP + H2O = 7,8-dihydroneopterin 2',3'-cyclic phosphate + formate + diphosphate + H(+). It functions in the pathway cofactor biosynthesis; 5,6,7,8-tetrahydromethanopterin biosynthesis. Its function is as follows. Converts GTP to 7,8-dihydro-D-neopterin 2',3'-cyclic phosphate, the first intermediate in the biosynthesis of coenzyme methanopterin. This Methanosarcina acetivorans (strain ATCC 35395 / DSM 2834 / JCM 12185 / C2A) protein is GTP cyclohydrolase MptA.